The primary structure comprises 177 residues: Alkyl hydroperoxide reductase AhpD (177 aa).

The active-site Proton donor is Cys131. Cysteines 131 and 134 form a disulfide. Residue Cys134 is the Cysteine sulfenic acid (-SOH) intermediate of the active site.

This sequence belongs to the AhpD family. In terms of assembly, homotrimer.

It catalyses the reaction N(6)-[(R)-dihydrolipoyl]-L-lysyl-[lipoyl-carrier protein] + a hydroperoxide = N(6)-[(R)-lipoyl]-L-lysyl-[lipoyl-carrier protein] + an alcohol + H2O. Antioxidant protein with alkyl hydroperoxidase activity. Required for the reduction of the AhpC active site cysteine residues and for the regeneration of the AhpC enzyme activity. The chain is Alkyl hydroperoxide reductase AhpD from Streptomyces griseus subsp. griseus (strain JCM 4626 / CBS 651.72 / NBRC 13350 / KCC S-0626 / ISP 5235).